Consider the following 248-residue polypeptide: Pyridoxine 5'-phosphate synthase (248 aa).

N7 provides a ligand contact to 3-amino-2-oxopropyl phosphate. 9–10 serves as a coordination point for 1-deoxy-D-xylulose 5-phosphate; it reads DH. Position 18 (R18) interacts with 3-amino-2-oxopropyl phosphate. H52 (proton acceptor) is an active-site residue. Positions 54 and 59 each coordinate 1-deoxy-D-xylulose 5-phosphate. The active-site Proton acceptor is the E79. A 1-deoxy-D-xylulose 5-phosphate-binding site is contributed by T109. H201 functions as the Proton donor in the catalytic mechanism. Residues G202 and 223-224 each bind 3-amino-2-oxopropyl phosphate; that span reads GH.

Belongs to the PNP synthase family. As to quaternary structure, homooctamer; tetramer of dimers.

It localises to the cytoplasm. The enzyme catalyses 3-amino-2-oxopropyl phosphate + 1-deoxy-D-xylulose 5-phosphate = pyridoxine 5'-phosphate + phosphate + 2 H2O + H(+). It functions in the pathway cofactor biosynthesis; pyridoxine 5'-phosphate biosynthesis; pyridoxine 5'-phosphate from D-erythrose 4-phosphate: step 5/5. Its function is as follows. Catalyzes the complicated ring closure reaction between the two acyclic compounds 1-deoxy-D-xylulose-5-phosphate (DXP) and 3-amino-2-oxopropyl phosphate (1-amino-acetone-3-phosphate or AAP) to form pyridoxine 5'-phosphate (PNP) and inorganic phosphate. The sequence is that of Pyridoxine 5'-phosphate synthase from Opitutus terrae (strain DSM 11246 / JCM 15787 / PB90-1).